Here is a 576-residue protein sequence, read N- to C-terminus: Lysine--tRNA ligase (576 aa).

The Mg(2+) site is built by E413 and E420.

The protein belongs to the class-II aminoacyl-tRNA synthetase family. As to quaternary structure, homodimer. Requires Mg(2+) as cofactor.

Its subcellular location is the cytoplasm. The catalysed reaction is tRNA(Lys) + L-lysine + ATP = L-lysyl-tRNA(Lys) + AMP + diphosphate. The sequence is that of Lysine--tRNA ligase from Bacteroides thetaiotaomicron (strain ATCC 29148 / DSM 2079 / JCM 5827 / CCUG 10774 / NCTC 10582 / VPI-5482 / E50).